We begin with the raw amino-acid sequence, 211 residues long: Probable nicotinate-nucleotide adenylyltransferase (211 aa).

It belongs to the NadD family.

The catalysed reaction is nicotinate beta-D-ribonucleotide + ATP + H(+) = deamido-NAD(+) + diphosphate. It participates in cofactor biosynthesis; NAD(+) biosynthesis; deamido-NAD(+) from nicotinate D-ribonucleotide: step 1/1. Functionally, catalyzes the reversible adenylation of nicotinate mononucleotide (NaMN) to nicotinic acid adenine dinucleotide (NaAD). The protein is Probable nicotinate-nucleotide adenylyltransferase of Gemmatimonas aurantiaca (strain DSM 14586 / JCM 11422 / NBRC 100505 / T-27).